A 282-amino-acid chain; its full sequence is Globin-related protein glb-13 (282 aa).

The disordered stretch occupies residues 1 to 46 (MGQENSKCPHQSLAEKRYKVERPKTKKVSSGSATERCLSTQSDEKN). Basic and acidic residues predominate over residues 13 to 23 (LAEKRYKVERP). Polar residues predominate over residues 28–41 (VSSGSATERCLSTQ). One can recognise a Globin domain in the interval 100 to 249 (FLTRRERILL…IISFMRRGFD (150 aa)). 2 residues coordinate heme b: H162 and H194.

It belongs to the globin family.

Functionally, involved in oxidative stress resistance. The protein is Globin-related protein glb-13 of Caenorhabditis elegans.